Consider the following 5654-residue polypeptide: Mucin-5AC (5654 aa).

A signal peptide spans 1–27; that stretch reads MSVGRRKLALLWALALALACTRHTGHA. Residues 27–49 form a disordered region; that stretch reads AQDGSSESSYKHHPALSPIARGP. In terms of domain architecture, VWFD 1 spans 79-249; it reads RVCSTWGSFH…KMDDPTDQCQ (171 aa). Intrachain disulfides connect cysteine 81/cysteine 211 and cysteine 103/cysteine 248. Glutamate 198 is a Cu(2+) binding site. 2 N-linked (GlcNAc...) asparagine glycosylation sites follow: asparagine 205 and asparagine 258. Residues histidine 320 and histidine 367 each coordinate Cu(2+). Residues 338 to 394 enclose the TIL 1 domain; that stretch reads CPNNMQYHECRSPCADTCSNQEHSRACEDHCVAGCFCPEGTVLDDIGQTGCVPVSKC. In terms of domain architecture, VWFC 1 spans 394–465; sequence CACVYNGAAY…CSYVLTKPCD (72 aa). N-linked (GlcNAc...) asparagine glycosylation occurs at asparagine 415. Residues 432–607 enclose the VWFD 2 domain; that stretch reads GTCSVLGGAH…NTFKTQAACP (176 aa). 3 disulfide bridges follow: cysteine 434/cysteine 571, cysteine 456/cysteine 606, and cysteine 478/cysteine 486. A glycan (N-linked (GlcNAc...) asparagine) is linked at asparagine 524. 2 consecutive TIL domains span residues 704 to 761 and 818 to 863; these read CPKS…ASNC and DTGA…AEDC. One can recognise a VWFD 3 domain in the interval 901–1072; it reads ATCAVYGDGH…NSWKLSPSCP (172 aa). 4 disulfide bridges follow: cysteine 903–cysteine 1036, cysteine 925–cysteine 1071, cysteine 934–cysteine 1033, and cysteine 953–cysteine 960. Residue asparagine 1308 is glycosylated (N-linked (GlcNAc...) asparagine). The segment at 1336-1377 is disordered; the sequence is LVVSSTHTPSNGPSSAHTGPPSSAWPTTAGTSPRTRLPTASA. A compositionally biased stretch (polar residues) spans 1338 to 1377; sequence VSSTHTPSNGPSSAHTGPPSSAWPTTAGTSPRTRLPTASA. A Cys-rich subdomain 1 repeat occupies 1383–1481; it reads CGEKCLWSPW…RVQCCTPLPC (99 aa). The segment at 1383–4731 is 9 X Cys-rich subdomain repeats; the sequence is CGEKCLWSPW…VLCCETPRGC (3349 aa). Tryptophan 1389 carries C-linked (Man) tryptophan glycosylation. Low complexity-rich tracts occupy residues 1483–1539 and 1547–1575; these read TSSS…TFST and ATSTSSMSTTAPGTSVVSSKPTPTEPSTS. The segment at 1483–1575 is disordered; the sequence is TSSSPAQTTP…KPTPTEPSTS (93 aa). The stretch at 1577–1677 is one Cys-rich subdomain 2 repeat; the sequence is CLQELCTWTE…IQCCETVNVC (101 aa). Tryptophan 1584 is a glycosylation site (C-linked (Man) tryptophan). Residues 1688–1733 are disordered; it reads ATTRPTPHPTGAQTQTTFTTHMPSASTEQPTATSRGGPTATSVTQG. The span at 1697-1707 shows a compositional bias: low complexity; that stretch reads TGAQTQTTFTT. Over residues 1708–1733 the composition is skewed to polar residues; that stretch reads HMPSASTEQPTATSRGGPTATSVTQG. Residues 1743 to 1847 form a Cys-rich subdomain 3 repeat; the sequence is CHPRCTWTKW…VLCCETPRGC (105 aa). C-linked (Man) tryptophan glycosylation occurs at tryptophan 1749. Residues 1849–1948 form a disordered region; sequence MTSTPGSTSS…KPTPTEPSTS (100 aa). Low complexity-rich tracts occupy residues 1850 to 1912 and 1920 to 1948; these read TSTP…TFST and ATSTSSMSTTAPGTSVVSSKPTPTEPSTS. The Cys-rich subdomain 4 repeat unit spans residues 1950–2050; it reads CLQELCTWTE…IQCCETVNVC (101 aa). Tryptophan 1957 is a glycosylation site (C-linked (Man) tryptophan). Residues 2059 to 2110 are disordered; sequence TVATTRPTPHPTGAQTQTTFTTHMPSASTEQPTATSRGGPTATSVTQGTHTT. Over residues 2070-2080 the composition is skewed to low complexity; that stretch reads TGAQTQTTFTT. Residues 2081–2110 show a composition bias toward polar residues; the sequence is HMPSASTEQPTATSRGGPTATSVTQGTHTT. The Cys-rich subdomain 5 repeat unit spans residues 2116-2220; that stretch reads CHPRCTWTTW…VLCCETPKGC (105 aa). A glycan (C-linked (Man) tryptophan) is linked at tryptophan 2122. The span at 2224–2234 shows a compositional bias: low complexity; it reads STPVTAPSTPS. Positions 2224–3214 are disordered; it reads STPVTAPSTP…SHVSISKTTH (991 aa). Residues 2235 to 2249 are compositionally biased toward polar residues; the sequence is GRATSPTQSTSSWQK. Low complexity-rich tracts occupy residues 2250-3184 and 3192-3214; these read SRTT…TPGP and PTTSTASVSKTSTSHVSISKTTH. Positions 2257-3200 are 107 X 8 AA approximate tandem repeats of T-T-S-T-T-S-A-P; the sequence is TTSTTSTPQT…VPTTSTASVS (944 aa). Threonine 2395, threonine 2405, threonine 2451, threonine 2461, threonine 2531, threonine 2541, threonine 2571, threonine 2581, threonine 2699, threonine 2709, threonine 2883, threonine 2893, threonine 2979, threonine 2989, threonine 3067, and threonine 3077 each carry an O-linked (GalNAc) threonine glycan. One copy of the Cys-rich subdomain 6 repeat lies at 3222–3326; it reads CHLRCTWTKW…VLCCETPKGC (105 aa). Tryptophan 3228 carries C-linked (Man) tryptophan glycosylation. The segment covering 3329–3340 has biased composition (low complexity); the sequence is TSTPVTAPSTPS. Residues 3329 to 3515 form a disordered region; sequence TSTPVTAPST…SVSKTTHSQP (187 aa). The segment covering 3341 to 3355 has biased composition (polar residues); sequence GRATSPTQSTSSWQK. Positions 3356-3513 are enriched in low complexity; sequence SRTTTLVTTS…HVSVSKTTHS (158 aa). The 17 X 8 AA approximate tandem repeats of T-T-S-T-T-S-A-P stretch occupies residues 3363–3498; it reads TTSTTSTPQT…VTTTSTASVS (136 aa). A Cys-rich subdomain 7 repeat occupies 3520 to 3660; sequence CHPRCTWTKW…WQKSRTTTLV (141 aa). A glycan (C-linked (Man) tryptophan) is linked at tryptophan 3526. The segment covering 3628-3638 has biased composition (low complexity); it reads STSVTAPSTPS. The segment at 3628-3951 is disordered; the sequence is STSVTAPSTP…KTTHSQPVTR (324 aa). The segment covering 3639-3660 has biased composition (polar residues); the sequence is GRATSPTQSTSSWQKSRTTTLV. The 34 X 8 AA approximate tandem repeats of T-T-S-T-T-S-A-P stretch occupies residues 3661–3931; that stretch reads TSSITSTTQT…VPTTSTASVS (271 aa). Residues 3661 to 3946 are compositionally biased toward low complexity; sequence TSSITSTTQT…HVSVSKTTHS (286 aa). An N-linked (GlcNAc...) asparagine glycan is attached at asparagine 3774. A Cys-rich subdomain 8 repeat occupies 3953-4057; that stretch reads CHPRCTWTKW…VLCCETPKGC (105 aa). C-linked (Man) tryptophan glycosylation is present at tryptophan 3959. Low complexity predominate over residues 4060-4071; sequence TSTPVTAPSTPS. The disordered stretch occupies residues 4060-4625; that stretch reads TSTPVTAPST…KTTHSQPVTS (566 aa). The segment covering 4072–4088 has biased composition (polar residues); that stretch reads GRATSPTQSTSSWQKSR. Positions 4089 to 4610 are enriched in low complexity; sequence TTTLVTTSTT…TTPVSKTSTS (522 aa). The tract at residues 4093-4595 is 58 X 8 AA approximate tandem repeats of T-T-S-T-T-S-A-P; it reads VTTSTTSTPQ…TSGPGTTPSP (503 aa). Residues threonine 4224, threonine 4234, threonine 4296, threonine 4306, threonine 4320, threonine 4330, threonine 4376, threonine 4386, threonine 4440, threonine 4450, threonine 4480, threonine 4490, threonine 4512, threonine 4522, threonine 4568, and threonine 4578 are each glycosylated (O-linked (GalNAc) threonine). A compositionally biased stretch (polar residues) spans 4611-4624; sequence HLSVSKTTHSQPVT. One copy of the Cys-rich subdomain 9 repeat lies at 4627–4731; sequence CHPLCAWTKW…VLCCETPRGC (105 aa). C-linked (Man) tryptophan glycosylation is present at tryptophan 4633. The disordered stretch occupies residues 4830 to 4849; that stretch reads TLPPAPATSPSISTSEPVTE. The region spanning 4852-4918 is the VWFC 2 domain; the sequence is CPNAVPPRKK…DGCCHHYQCQ (67 aa). Residues asparagine 4869 and asparagine 4942 are each glycosylated (N-linked (GlcNAc...) asparagine). One can recognise a VWFD 4 domain in the interval 4919–5103; that stretch reads CVCSGWGDPH…VSIPDQPACH (185 aa). Disulfide bonds link cysteine 4921/cysteine 5063, cysteine 4943/cysteine 5102, and cysteine 4967/cysteine 4975. 3 N-linked (GlcNAc...) asparagine glycosylation sites follow: asparagine 5057, asparagine 5093, and asparagine 5236. The VWFC 3 domain occupies 5276 to 5345; the sequence is PRCLGPHGEP…GQCCPQYSCA (70 aa). N-linked (GlcNAc...) asparagine glycans are attached at residues asparagine 5347, asparagine 5377, asparagine 5386, asparagine 5455, and asparagine 5528. Positions 5381-5448 constitute a VWFC 4 domain; that stretch reads TVCSINGTLY…QSGQCCGTCV (68 aa). Cystine bridges form between cysteine 5532-cysteine 5582, cysteine 5546-cysteine 5596, cysteine 5557-cysteine 5612, and cysteine 5561-cysteine 5614. Residues 5532 to 5620 form the CTCK domain; sequence CAVYHRSLII…ECGCMGRRCP (89 aa). An N-linked (GlcNAc...) asparagine glycan is attached at asparagine 5591. The segment at 5622 to 5654 is disordered; the sequence is PGDTQHSEEAEPEPSQEAESGSWERGVPVSPMH.

Homomultimer; disulfide-linked. The N- and C-terminus mediate their assembly into higher order structures to form filaments. The CTCK domains of two polypeptides associate in the endoplasmic reticulum to generate intermolecularly disulfide-bonded dimers. These dimers progress to the Golgi apparatus, which is a more acidic environment than the endoplasmic reticulum. Under acidic conditions, the N-termini form non-covalent intermolecular interactions that juxtapose assemblies from different CTCK-linked dimers to produce long, disulfide-linked polymers that remain highly compact until secretion. In terms of processing, C-, O- and N-glycosylated. O-glycosylated on the second and last Thr of the Thr-/Ser-rich tandem repeats TTPSPVPTTSTTSA. One form of glycosylation is also known as Lewis B (LeB) blood group antigen, a tetrasaccharide consisting of N-acetylglucosamine having a fucosyl residue attached. It has a role as an epitope and antigen and functions as a receptor for H.pylori binding and facilitates infection. C-mannosylation in the Cys-rich subdomains may be required for proper folding of these regions and for export from the endoplasmic reticulum during biosynthesis. Post-translationally, proteolytic cleavage in the C-terminal is initiated early in the secretory pathway and does not involve a serine protease. The extent of cleavage is increased in the acidic parts of the secretory pathway. Cleavage generates a reactive group which could link the protein to a primary amide. In terms of tissue distribution, highly expressed in surface mucosal cells of respiratory tract and stomach epithelia. Overexpressed in a number of carcinomas. Also expressed in Barrett's esophagus epithelium and in the proximal duodenum.

It is found in the secreted. Gel-forming glycoprotein of gastric and respiratory tract epithelia that protects the mucosa from infection and chemical damage by binding to inhaled microorganisms and particles that are subsequently removed by the mucociliary system. Interacts with H.pylori in the gastric epithelium, Barrett's esophagus as well as in gastric metaplasia of the duodenum (GMD). The chain is Mucin-5AC from Homo sapiens (Human).